The following is a 464-amino-acid chain: Probable LL-diaminopimelate aminotransferase, chloroplastic (464 aa).

The transit peptide at 1–39 (MAASPAAGAAAATVSSFVSPSSFSSVKASKPDRLRPARR) directs the protein to the chloroplast. G102 contacts substrate. Y132 lines the pyridoxal 5'-phosphate pocket. Substrate is bound by residues E135, K167, Y190, and N247. 5 residues coordinate pyridoxal 5'-phosphate: N247, D275, Y278, S305, and S307. The residue at position 308 (K308) is an N6-(pyridoxal phosphate)lysine. R316 contributes to the pyridoxal 5'-phosphate binding site. Positions 347 and 442 each coordinate substrate.

It belongs to the class-I pyridoxal-phosphate-dependent aminotransferase family. LL-diaminopimelate aminotransferase subfamily. In terms of assembly, homodimer. Pyridoxal 5'-phosphate is required as a cofactor.

Its subcellular location is the plastid. It is found in the chloroplast. The enzyme catalyses (2S,6S)-2,6-diaminopimelate + 2-oxoglutarate = (S)-2,3,4,5-tetrahydrodipicolinate + L-glutamate + H2O + H(+). Its pathway is amino-acid biosynthesis; L-lysine biosynthesis via DAP pathway; LL-2,6-diaminopimelate from (S)-tetrahydrodipicolinate (aminotransferase route): step 1/1. Functionally, required for lysine biosynthesis. Catalyzes the direct conversion of tetrahydrodipicolinate to LL-diaminopimelate, a reaction that requires three enzymes in E.coli. The protein is Probable LL-diaminopimelate aminotransferase, chloroplastic (AGD2) of Oryza sativa subsp. japonica (Rice).